Here is a 239-residue protein sequence, read N- to C-terminus: Purine nucleoside phosphorylase DeoD-type (239 aa).

His-5 serves as a coordination point for a purine D-ribonucleoside. Phosphate is bound by residues Gly-21, Arg-25, Arg-44, and 89–92; that span reads RVGS. A purine D-ribonucleoside-binding positions include 180–182 and 204–205; these read EME and SD. The Proton donor role is filled by Asp-205.

The protein belongs to the PNP/UDP phosphorylase family. In terms of assembly, homohexamer; trimer of homodimers.

The enzyme catalyses a purine D-ribonucleoside + phosphate = a purine nucleobase + alpha-D-ribose 1-phosphate. It carries out the reaction a purine 2'-deoxy-D-ribonucleoside + phosphate = a purine nucleobase + 2-deoxy-alpha-D-ribose 1-phosphate. Functionally, catalyzes the reversible phosphorolytic breakdown of the N-glycosidic bond in the beta-(deoxy)ribonucleoside molecules, with the formation of the corresponding free purine bases and pentose-1-phosphate. The polypeptide is Purine nucleoside phosphorylase DeoD-type (Klebsiella pneumoniae).